The chain runs to 338 residues: Malate dehydrogenase, mitochondrial (338 aa).

A mitochondrion-targeting transit peptide spans 1–24; that stretch reads MLSALARPASAALRRSFSTSAQNN. NAD(+) contacts are provided by residues 31–37 and Asp57; that span reads GASGGIG. Ser33 carries O-linked (GlcNAc) serine glycosylation. N6-acetyllysine; alternate is present on residues Lys78 and Lys91. Residues Lys78 and Lys91 each carry the N6-succinyllysine; alternate modification. Substrate-binding residues include Arg104 and Arg110. NAD(+) contacts are provided by residues Asn117 and 140 to 142; that span reads IAN. A substrate-binding site is contributed by Asn142. Residue Lys165 is modified to N6-acetyllysine. Residue Arg176 coordinates substrate. Lys185 is modified (N6-acetyllysine; alternate). Position 185 is an N6-succinyllysine; alternate (Lys185). Catalysis depends on His200, which acts as the Proton acceptor. Position 203 is an N6-succinyllysine (Lys203). Residues Lys215 and Lys239 each carry the N6-acetyllysine; alternate modification. N6-succinyllysine; alternate occurs at positions 215 and 239. Position 239 is an N6-malonyllysine; alternate (Lys239). Residue Ser246 is modified to Phosphoserine. Met251 contacts NAD(+). Position 269 is an N6-succinyllysine (Lys269). 4 positions are modified to N6-acetyllysine; alternate: Lys296, Lys301, Lys314, and Lys324. Lys296, Lys301, Lys314, and Lys324 each carry N6-succinyllysine; alternate. Ser326 carries the post-translational modification Phosphoserine. Lys328, Lys329, and Lys335 each carry N6-acetyllysine; alternate. Lys328 is subject to N6-succinyllysine; alternate. Residue Lys329 is modified to N6-malonyllysine; alternate. Lys335 is subject to N6-succinyllysine; alternate.

The protein belongs to the LDH/MDH superfamily. MDH type 1 family. As to quaternary structure, homodimer. Acetylation is enhanced after treatment either with trichostin A (TCA) or with nicotinamide (NAM) with the appearance of tri- and tetraacetylations. Glucose also increases acetylation.

The protein localises to the mitochondrion matrix. It catalyses the reaction (S)-malate + NAD(+) = oxaloacetate + NADH + H(+). Its activity is regulated as follows. Enzyme activity is enhanced by acetylation. This chain is Malate dehydrogenase, mitochondrial (MDH2), found in Macaca fascicularis (Crab-eating macaque).